The following is a 321-amino-acid chain: 1D-myo-inositol 2-acetamido-2-deoxy-alpha-D-glucopyranoside deacetylase (321 aa).

H15, D18, and H150 together coordinate Zn(2+). The interval 280–321 (PEGERESDLFAGLPPATDGTGAAGAPSATGAANPADAEGGAA) is disordered. Positions 290-321 (AGLPPATDGTGAAGAPSATGAANPADAEGGAA) are enriched in low complexity.

The protein belongs to the MshB deacetylase family. It depends on Zn(2+) as a cofactor.

It carries out the reaction 1D-myo-inositol 2-acetamido-2-deoxy-alpha-D-glucopyranoside + H2O = 1D-myo-inositol 2-amino-2-deoxy-alpha-D-glucopyranoside + acetate. Catalyzes the deacetylation of 1D-myo-inositol 2-acetamido-2-deoxy-alpha-D-glucopyranoside (GlcNAc-Ins) in the mycothiol biosynthesis pathway. This is 1D-myo-inositol 2-acetamido-2-deoxy-alpha-D-glucopyranoside deacetylase from Streptomyces griseus subsp. griseus (strain JCM 4626 / CBS 651.72 / NBRC 13350 / KCC S-0626 / ISP 5235).